The chain runs to 221 residues: Abscisic acid receptor PYL1 (221 aa).

Over residues 1–11 (MANSESSSSPV) the composition is skewed to low complexity. A disordered region spans residues 1-22 (MANSESSSSPVNEEENSQRIST). Ala-2 is modified (N-acetylalanine). Residues 50–206 (YQLGNGRCSS…NLQKLASITE (157 aa)) form an START-like region. Residues Lys-86, 116–121 (ANTSRE), 143–149 (RLRNYKS), and Glu-171 each bind abscisate. Positions 112-116 (SGLPA) match the Gate loop motif. Positions 142–144 (HRL) match the Latch loop motif.

The protein belongs to the PYR/PYL/RCAR abscisic acid intracellular receptor family. Homodimer. Binds ABA on one subunit only. Interacts with HAB1, ABI1 and ABI2, and possibly with other PP2Cs. Binds to CARs protein in an ABA-independent manner, both at the plasma membrane and in the nucleus. Interacts directly with CAR1 and CAR4.

The protein localises to the cytoplasm. Its subcellular location is the nucleus. The protein resides in the cell membrane. In terms of biological role, receptor for abscisic acid (ABA) required for ABA-mediated responses such as stomatal closure and germination inhibition. Inhibits the activity of group-A protein phosphatases type 2C (PP2Cs) when activated by ABA. Can be activated by both (-)-ABA and (+)-ABA. This chain is Abscisic acid receptor PYL1 (PYL1), found in Arabidopsis thaliana (Mouse-ear cress).